The sequence spans 128 residues: Phosphoribosyl-AMP cyclohydrolase (128 aa).

Asp79 lines the Mg(2+) pocket. A Zn(2+)-binding site is contributed by Cys80. Residues Asp81 and Asp83 each coordinate Mg(2+). Zn(2+) contacts are provided by Cys97 and Cys104.

The protein belongs to the PRA-CH family. Homodimer. Mg(2+) is required as a cofactor. Requires Zn(2+) as cofactor.

It localises to the cytoplasm. The catalysed reaction is 1-(5-phospho-beta-D-ribosyl)-5'-AMP + H2O = 1-(5-phospho-beta-D-ribosyl)-5-[(5-phospho-beta-D-ribosylamino)methylideneamino]imidazole-4-carboxamide. The protein operates within amino-acid biosynthesis; L-histidine biosynthesis; L-histidine from 5-phospho-alpha-D-ribose 1-diphosphate: step 3/9. In terms of biological role, catalyzes the hydrolysis of the adenine ring of phosphoribosyl-AMP. In Saccharophagus degradans (strain 2-40 / ATCC 43961 / DSM 17024), this protein is Phosphoribosyl-AMP cyclohydrolase.